Here is an 860-residue protein sequence, read N- to C-terminus: MQEQYRPEEIESKVQLHWEEKRTFEVTEDESKEKYYCLSMLPYPSGRLHMGHVRNYTIGDVIARYQRMLGKNVLQPIGWDAFGLPAEGAAVKNNTAPAPWTYDNINYMKNQLKMLGFGYDWSRELATCTPEYYRWEQQFFTELYKKGLVYKKTSAVNWCPNDQTVLANEQVIDGCCWRCDTKVERKEIPQWFIKITAYADELLNDLDKLDHWPDTVKTMQRNWIGRSEGVEITFDVQNSDEKLTVYTTRPDTFMGVTYLAVAAGHPLAQAAAAANPALGDFIAECRNTKVAEADMATMEKKGVDTGLKAIHPLTGEAIPVWAANFVLMEYGTGAVMAVPGHDQRDYEFATKYSLPIKPVILTAEGTAPDLSEQALTEKGVLFNSGEFDGLDFEAAFNAIADKLAAKGVGERKVNYRLRDWGVSRQRYWGAPIPMVTLEDGTVMPTPADQLPVILPEDVVMDGITSPIKADPEWAKTTVNGQPALRETDTFDTFMESSWYYARYTCPQYKEGMLDEKAANYWLPVDIYIGGIEHAIMHLLYFRFFHKLMRDAGMVNSDEPAKQLLCQGMVLADAFYYVGANGERNWVSPKDAIVERDEKGRIVKASDAAGHELVYTGMSKMSKSKNNGIDPQEMVERYGADTVRLFMMFASPADMTLEWQESGVEGANRFLKRVWRLVYEHTSLGDAPALNVDALNDDQKALRRDVHKTIAKVSDDIGRRQTFNTAIAAIMELMNKLAKAPQEGEQDRALMREALLAVVRMLNPFTPHVSFTLWQELKGEGDIDNAPWPQADDSAMVEDTTLVVVQVNGKVRGKITVAADATEEQVRERAAQEHLVAKYLAGVTVRKVIYVPGKLLNLVVG.

A 'HIGH' region motif is present at residues 42–52; sequence PYPSGRLHMGH. A 'KMSKS' region motif is present at residues 619 to 623; the sequence is KMSKS. Residue K622 participates in ATP binding.

The protein belongs to the class-I aminoacyl-tRNA synthetase family.

The protein localises to the cytoplasm. The enzyme catalyses tRNA(Leu) + L-leucine + ATP = L-leucyl-tRNA(Leu) + AMP + diphosphate. The sequence is that of Leucine--tRNA ligase from Cronobacter sakazakii (strain ATCC BAA-894) (Enterobacter sakazakii).